The primary structure comprises 361 residues: Peptide chain release factor 1 (361 aa).

Position 235 is an N5-methylglutamine (Q235). The tract at residues 288 to 307 is disordered; the sequence is AAEAQTRKLQVGSGDRSQRI.

This sequence belongs to the prokaryotic/mitochondrial release factor family. In terms of processing, methylated by PrmC. Methylation increases the termination efficiency of RF1.

It localises to the cytoplasm. Functionally, peptide chain release factor 1 directs the termination of translation in response to the peptide chain termination codons UAG and UAA. The chain is Peptide chain release factor 1 from Xanthomonas axonopodis pv. citri (strain 306).